A 300-amino-acid polypeptide reads, in one-letter code: Acetylglutamate kinase (300 aa).

Substrate contacts are provided by residues 68–69 (GG), Arg90, and Asn194.

This sequence belongs to the acetylglutamate kinase family. ArgB subfamily.

The protein localises to the cytoplasm. The catalysed reaction is N-acetyl-L-glutamate + ATP = N-acetyl-L-glutamyl 5-phosphate + ADP. Its pathway is amino-acid biosynthesis; L-arginine biosynthesis; N(2)-acetyl-L-ornithine from L-glutamate: step 2/4. Its function is as follows. Catalyzes the ATP-dependent phosphorylation of N-acetyl-L-glutamate. The sequence is that of Acetylglutamate kinase from Methanocella arvoryzae (strain DSM 22066 / NBRC 105507 / MRE50).